The following is a 619-amino-acid chain: Kinesin light chain 4 (619 aa).

The residue at position 2 (S2) is an N-acetylserine. Residues 55–88 (QQGGHEEGLVHEKARQLRRSMENIELGLSEAQVM) form a TPR 1 repeat. Residues 65 to 155 (HEKARQLRRS…HLEFLRQLRQ (91 aa)) are a coiled coil. Over residues 156 to 175 (YDEDGHGMEEKEGEATKDSL) the composition is skewed to basic and acidic residues. Residues 156 to 199 (YDEDGHGMEEKEGEATKDSLDDLFPNEEEEDSGNDLSRGQGAAA) are disordered. S174 is subject to Phosphoserine. Over residues 179–188 (FPNEEEEDSG) the composition is skewed to acidic residues. TPR repeat units lie at residues 211 to 244 (LRTL…LERT), 253 to 286 (ATML…REST), 295 to 328 (AATL…REKV), 337 to 370 (AKQL…YESQ), and 379 to 412 (ARTK…AHVQ). S460 carries the post-translational modification Phosphoserine. One copy of the TPR 7 repeat lies at 464 to 497 (NTTLKNLGALYRRQGKLEAAETLEECALRSRKQG). Phosphoserine occurs at positions 565, 566, and 590. A disordered region spans residues 571-619 (RKLQGTEPRPSSSSMKRAASLNYLNQPNAAPLQVSRGLSASTVDLSSSS). A compositionally biased stretch (low complexity) spans 609-619 (SASTVDLSSSS). Position 612 is a phosphothreonine (T612).

The protein belongs to the kinesin light chain family. In terms of assembly, oligomeric complex composed of two heavy chains and two light chains.

It localises to the cytoplasm. It is found in the cytoskeleton. Kinesin is a microtubule-associated force-producing protein that may play a role in organelle transport. The light chain may function in coupling of cargo to the heavy chain or in the modulation of its ATPase activity. This Mus musculus (Mouse) protein is Kinesin light chain 4 (Klc4).